Reading from the N-terminus, the 340-residue chain is Eukaryotic translation initiation factor 3 subunit I (340 aa).

WD repeat units lie at residues 8 to 47 (GHERSLNQIKFNRDGDLLFSVAKDKIVCAWWSANGERLGT), 50 to 91 (GHQG…KVWD), 150 to 189 (CTESKATVAGWSYLGKYIIAGHEDGSVSQYDGKTGEQLEN), 194 to 233 (EFDHQINDIQFSQDRTYFITASKDKSAKLISSRNLAILKT), and 291 to 330 (GHFGPLNTVDVHPNGTAYASGGEDGYVRVHHFDKPYFDFM).

Belongs to the eIF-3 subunit I family. As to quaternary structure, component of the eukaryotic translation initiation factor 3 (eIF-3) complex.

It is found in the cytoplasm. Its function is as follows. Component of the eukaryotic translation initiation factor 3 (eIF-3) complex, which is involved in protein synthesis of a specialized repertoire of mRNAs and, together with other initiation factors, stimulates binding of mRNA and methionyl-tRNAi to the 40S ribosome. The eIF-3 complex specifically targets and initiates translation of a subset of mRNAs involved in cell proliferation. This Neosartorya fischeri (strain ATCC 1020 / DSM 3700 / CBS 544.65 / FGSC A1164 / JCM 1740 / NRRL 181 / WB 181) (Aspergillus fischerianus) protein is Eukaryotic translation initiation factor 3 subunit I (tif34).